Reading from the N-terminus, the 294-residue chain is Cytidine deaminase (294 aa).

2 CMP/dCMP-type deaminase domains span residues 48 to 168 and 186 to 294; these read DEDA…FGPK and LTGD…TLLA. 89–91 lines the substrate pocket; sequence NME. Residue H102 coordinates Zn(2+). Residue E104 is the Proton donor of the active site. Zn(2+)-binding residues include C129 and C132.

The protein belongs to the cytidine and deoxycytidylate deaminase family. Homodimer. It depends on Zn(2+) as a cofactor.

It carries out the reaction cytidine + H2O + H(+) = uridine + NH4(+). The catalysed reaction is 2'-deoxycytidine + H2O + H(+) = 2'-deoxyuridine + NH4(+). Its function is as follows. This enzyme scavenges exogenous and endogenous cytidine and 2'-deoxycytidine for UMP synthesis. The protein is Cytidine deaminase of Enterobacter sp. (strain 638).